We begin with the raw amino-acid sequence, 321 residues long: MLVDSFNRVIDYIRVSVTKQCNFRCQYCMPATPLNFFDNEELLPLDNVLEFLKIAIDEGVKKIRITGGEPLLRKGLDEFIAKLHAYNKEVELVLSTNGFLLKKMAKDLKNAGLAQVNVSLDSLKSDRVLKISQKDALKNTLEGIEESLKVGLKLKLNTVVIKSVNDDEILELLEYAKNRHIQIRYIEFMENTHAKSLVKGLKEREILDLIAQKYQIIEAEKPKQGSSKIYTLENGYQFGIIAPHSDDFCQSCNRIRLASDGKICPCLYYQDAIDAKEAIINKDTKNIKRLLKQSVINKPEKNMWNDKNSETPTRAFYYTGG.

One can recognise a Radical SAM core domain in the interval 5 to 233; that stretch reads SFNRVIDYIR…QGSSKIYTLE (229 aa). A GTP-binding site is contributed by R14. Residues C21 and C25 each contribute to the [4Fe-4S] cluster site. An S-adenosyl-L-methionine-binding site is contributed by Y27. Residue C28 coordinates [4Fe-4S] cluster. R64 contributes to the GTP binding site. G68 contributes to the S-adenosyl-L-methionine binding site. S95 serves as a coordination point for GTP. Residue S119 participates in S-adenosyl-L-methionine binding. A GTP-binding site is contributed by K155. Residue M189 coordinates S-adenosyl-L-methionine. [4Fe-4S] cluster is bound by residues C249 and C252. GTP is bound at residue 254–256; it reads RIR. C266 is a binding site for [4Fe-4S] cluster.

It belongs to the radical SAM superfamily. MoaA family. Monomer and homodimer. Requires [4Fe-4S] cluster as cofactor.

The catalysed reaction is GTP + AH2 + S-adenosyl-L-methionine = (8S)-3',8-cyclo-7,8-dihydroguanosine 5'-triphosphate + 5'-deoxyadenosine + L-methionine + A + H(+). Its pathway is cofactor biosynthesis; molybdopterin biosynthesis. Its function is as follows. Catalyzes the cyclization of GTP to (8S)-3',8-cyclo-7,8-dihydroguanosine 5'-triphosphate. This is GTP 3',8-cyclase from Helicobacter pylori (strain ATCC 700392 / 26695) (Campylobacter pylori).